The chain runs to 943 residues: Isoleucine--tRNA ligase (943 aa).

The 'HIGH' region signature appears at Pro-59–His-69. L-isoleucyl-5'-AMP is bound at residue Glu-577. The 'KMSKS' region signature appears at Lys-618–Ser-622. Lys-621 is a binding site for ATP. Positions 906, 909, 926, and 929 each coordinate Zn(2+).

Belongs to the class-I aminoacyl-tRNA synthetase family. IleS type 1 subfamily. Monomer. Zn(2+) is required as a cofactor.

The protein localises to the cytoplasm. The enzyme catalyses tRNA(Ile) + L-isoleucine + ATP = L-isoleucyl-tRNA(Ile) + AMP + diphosphate. Functionally, catalyzes the attachment of isoleucine to tRNA(Ile). As IleRS can inadvertently accommodate and process structurally similar amino acids such as valine, to avoid such errors it has two additional distinct tRNA(Ile)-dependent editing activities. One activity is designated as 'pretransfer' editing and involves the hydrolysis of activated Val-AMP. The other activity is designated 'posttransfer' editing and involves deacylation of mischarged Val-tRNA(Ile). This Xylella fastidiosa (strain M12) protein is Isoleucine--tRNA ligase.